Consider the following 99-residue polypeptide: DNA-binding protein Fis (99 aa).

A DNA-binding region (H-T-H motif) is located at residues 75 to 94; the sequence is QTRAATMLGINRGTLRKKLK.

This sequence belongs to the transcriptional regulatory Fis family. Homodimer.

Functionally, activates ribosomal RNA transcription. Plays a direct role in upstream activation of rRNA promoters. The chain is DNA-binding protein Fis from Pasteurella multocida (strain Pm70).